A 238-amino-acid chain; its full sequence is Uridylate kinase (238 aa).

13 to 16 (KLSG) is an ATP binding site. Residue Gly53 participates in UMP binding. ATP is bound by residues Gly54 and Arg58. Residues Asp73 and 134 to 141 (AGLPYFST) contribute to the UMP site. 3 residues coordinate ATP: Asn162, Tyr168, and Asp171.

It belongs to the UMP kinase family. In terms of assembly, homohexamer.

The protein resides in the cytoplasm. It carries out the reaction UMP + ATP = UDP + ADP. The protein operates within pyrimidine metabolism; CTP biosynthesis via de novo pathway; UDP from UMP (UMPK route): step 1/1. Its activity is regulated as follows. Inhibited by UTP. Its function is as follows. Catalyzes the reversible phosphorylation of UMP to UDP. The chain is Uridylate kinase from Clavibacter michiganensis subsp. michiganensis (strain NCPPB 382).